Here is a 117-residue protein sequence, read N- to C-terminus: MKKVSWEKREKKKVAIERIDTLFTLAEKVVKYSPDLARRYVELALEIQKKSKVKLPRKWKRRYCKRCHAFLVPGFNARVRLRTDRMPHVVITCLECGHIMRYPYLREVKEKRKRKKD.

Positions 64, 67, 93, and 96 each coordinate Zn(2+).

This sequence belongs to the eukaryotic/archaeal RNase P protein component 4 family. In terms of assembly, consists of a catalytic RNA component and at least 4-5 protein subunits. Zn(2+) is required as a cofactor.

It localises to the cytoplasm. It carries out the reaction Endonucleolytic cleavage of RNA, removing 5'-extranucleotides from tRNA precursor.. In terms of biological role, part of ribonuclease P, a protein complex that generates mature tRNA molecules by cleaving their 5'-ends. The protein is Ribonuclease P protein component 4 of Pyrococcus abyssi (strain GE5 / Orsay).